Here is a 313-residue protein sequence, read N- to C-terminus: UbiA prenyltransferase claS (313 aa).

A run of 2 helical transmembrane segments spans residues 30 to 52 (FAGT…RALL) and 57 to 79 (TFGT…GCIW). An NDxxDxxxD motif is present at residues 81 to 88 (DILDQDFD). D84 and D88 together coordinate Mg(2+). A run of 3 helical transmembrane segments spans residues 99-121 (IASG…FILM), 131-148 (AWMI…IYPL), and 155-177 (WPQA…YTTG). Positions 205 and 209 each coordinate Mg(2+). The DxxxD signature appears at 205–209 (DKKDD). A YxxxK motif is present at residues 205–209 (DKKDD). Transmembrane regions (helical) follow at residues 227–247 (PVLS…GILN), 250–270 (ELPY…TQLW), and 293–313 (AIVW…GAIM).

This sequence belongs to the UbiA prenyltransferase family. Mg(2+) serves as cofactor.

It localises to the membrane. The enzyme catalyses hydroquinone + (2E)-geranyl diphosphate = (2E)-geranylhydroquinone + diphosphate. It participates in secondary metabolite biosynthesis; terpenoid biosynthesis. Functionally, prenyltransferase; part of the gene cluster that mediates the biosynthesis of clavilactone A, a meroterpenoid that features a unique benzo-fused ten-membered carbocyclic ring unit with an alpha,beta-epoxy-gamma-lactone moiety, forming an intriguing 10/5/3 tricyclic nested skeleton. ClaR, ClaS and ClaT are sufficient to produce clavilactone A. Within the pathway, claS acts as an atypical UbiA prenyltransferase that transfers geranyl pyrophosphate (GPP) to hydroquinone (HYQ) instead of p-hydroxybenzoic acid (PHB), producing the first intermediate geranylhydroquinone. The cytochrome P450 monooxygenase claR then catalyzes the diradical coupling reaction between the intramolecular hydroquinone and allyl moieties to form the benzo-fused ten-membered carbocyclic ring unit of wigantol. Finally the cytochrome P450 monooxygenase claT exquisitely and stereoselectively assembles the alpha,beta-epoxy-gamma-lactone moiety, producing clavilactone A via arnebinol A. The polypeptide is UbiA prenyltransferase claS (Ampulloclitocybe clavipes (Club foot)).